Here is a 229-residue protein sequence, read N- to C-terminus: IDRKLERYDSPRYTYMVIDKKNPVDVFIVTSYPDEWADIYTSQNYQHIDPIVLTAFKRISPFAWDENITILSDLKSSKIFALSKKYNIVNGFTFVLHDHMNNLAMLSLIMDNNADKGLNSRIESDKDRLQMNLIKIHEKMLMLEQNKLGVSNGKNTDTSGKGILSPRENEVLHWASMGKTYPEIALIAGITTRTVKHHMGNVVKKLGVINARQAIRLGVELELIKPVLV.

The 66-residue stretch at 157 to 222 (DTSGKGILSP…QAIRLGVELE (66 aa)) folds into the HTH luxR-type domain. Residues 181-200 (YPEIALIAGITTRTVKHHMG) constitute a DNA-binding region (H-T-H motif).

The protein belongs to the autoinducer-regulated transcriptional regulatory protein family.

Its function is as follows. Probable transcriptional activator. Binds to an autoinducer molecule. This Yersinia ruckeri protein is Transcriptional activator protein YukR (yukR).